The following is a 699-amino-acid chain: MNPSEMQRKAPPRRRRHRNRAPLTHKMNKMVTSEEQMKLPSTKKAEPPTWAQLKKLTQLATKYLENTKVTQTPESMLLAALMIVSMVVSLPMPAGAAAANYTYWAYVPFPPLIRAVTWMDNPIEVYVNDSVWVPGPTDDHCPAKPEEEGMMINISIGYRYPPICLGRAPGCLMPAVQNWLVEVPTVSPISRFTYHMVSGMSLRPRVNYLQDFSYQRSFKFRPKGKPCPKEIPKESKNTEVLVWEECVANSAVILQNNEFGTIIDWAPRGQFYHNCSGQTQSCPSAQVSPAVDSDLTESLDKHKHKKLQSFYPWEWGEKGISTPRPKIISPVSGPEHPELWRLTVASHHIRIWSGNQTLETRDRKPFYTVDLNSSVTVPLQSCIKPPYMLVVGNIVIKPDSQTITCENCRLLTCIDSTFNWQHRILLVRAREGVWIPVSMDRPWETSPSIHTLTEVLKGVLNRSKRFIFTLIAVIMGLIAVTATAAVAGVALHSSVQSVNFVNDWQKNSTRLWNSQSSIDQKLANQINDLRQTVIWMGDRLMSLEHRFQLQCDWNTSDFSITPQIYNESEHHWDMVRRHLQGREDNLTLDISKLKEQIFEASKAHLNLVPGTEAIAGVADGLANLNPVTWVKTIGSTTIINLILILVCLFCLLLVCRCTQQLRRDSDHRERAMMTMAVLSKRKGGNVGKSKRDQIVTVSV.

The segment at 1 to 47 (MNPSEMQRKAPPRRRRHRNRAPLTHKMNKMVTSEEQMKLPSTKKAEP) is disordered. The first 89 residues, 1-89 (MNPSEMQRKA…ALMIVSMVVS (89 aa)), serve as a signal peptide directing secretion. Positions 10–20 (APPRRRRHRNR) are enriched in basic residues. Over 90–632 (LPMPAGAAAA…NLNPVTWVKT (543 aa)) the chain is Extracellular. 7 N-linked (GlcNAc...) asparagine glycosylation sites follow: N100, N128, N153, N274, N355, N372, and N461. The segment at 466–486 (FIFTLIAVIMGLIAVTATAAV) is fusion peptide. N-linked (GlcNAc...) asparagine glycans are attached at residues N507, N554, N566, and N585. Residues 633–653 (IGSTTIINLILILVCLFCLLL) form a helical membrane-spanning segment. The Cytoplasmic portion of the chain corresponds to 654 to 699 (VCRCTQQLRRDSDHRERAMMTMAVLSKRKGGNVGKSKRDQIVTVSV).

The protein belongs to the beta type-B retroviral envelope protein family. HERV class-II K(HML-2) env subfamily. As to quaternary structure, the surface (SU) and transmembrane (TM) proteins form a heterodimer. SU and TM are attached by noncovalent interactions or by a labile interchain disulfide bond. In terms of processing, specific enzymatic cleavages in vivo yield the mature SU and TM proteins.

It localises to the cell membrane. It is found in the virion. Retroviral envelope proteins mediate receptor recognition and membrane fusion during early infection. Endogenous envelope proteins may have kept, lost or modified their original function during evolution. This endogenous envelope protein has lost its original fusogenic properties. Its function is as follows. SU mediates receptor recognition. Functionally, TM anchors the envelope heterodimer to the viral membrane through one transmembrane domain. The other hydrophobic domain, called fusion peptide, mediates fusion of the viral membrane with the target cell membrane. The chain is Endogenous retrovirus group K member 19 Env polyprotein (ERVK-19) from Homo sapiens (Human).